A 465-amino-acid polypeptide reads, in one-letter code: UDP-N-acetylmuramate--L-alanine ligase (465 aa).

112–118 (GTHGKTT) is a binding site for ATP.

It belongs to the MurCDEF family.

The protein localises to the cytoplasm. It catalyses the reaction UDP-N-acetyl-alpha-D-muramate + L-alanine + ATP = UDP-N-acetyl-alpha-D-muramoyl-L-alanine + ADP + phosphate + H(+). The protein operates within cell wall biogenesis; peptidoglycan biosynthesis. Cell wall formation. In Janthinobacterium sp. (strain Marseille) (Minibacterium massiliensis), this protein is UDP-N-acetylmuramate--L-alanine ligase.